We begin with the raw amino-acid sequence, 233 residues long: Glutathione S-transferase U15 (233 aa).

Residues 5-85 (EEVKLLGTWY…YIDETWNSSG (81 aa)) enclose the GST N-terminal domain. Glutathione contacts are provided by residues 15-16 (SP), 42-43 (SK), 56-57 (KV), and 69-70 (VS). One can recognise a GST C-terminal domain in the interval 92 to 219 (HPYDRALARF…VPDIDKVAKF (128 aa)). A Phosphothreonine modification is found at Thr158.

It belongs to the GST superfamily. Tau family.

Its subcellular location is the cytoplasm. It is found in the cytosol. The catalysed reaction is RX + glutathione = an S-substituted glutathione + a halide anion + H(+). Its function is as follows. May be involved in the conjugation of reduced glutathione to a wide number of exogenous and endogenous hydrophobic electrophiles and have a detoxification role against certain herbicides. This Arabidopsis thaliana (Mouse-ear cress) protein is Glutathione S-transferase U15 (GSTU15).